Here is a 292-residue protein sequence, read N- to C-terminus: Pantothenate synthetase (292 aa).

Residue 32-39 (MGFLHEGH) participates in ATP binding. The active-site Proton donor is His39. Gln63 is a (R)-pantoate binding site. Residue Gln63 participates in beta-alanine binding. ATP is bound at residue 150–153 (GEKD). Residue Gln156 coordinates (R)-pantoate. Residues Val179 and 187 to 190 (MSSR) each bind ATP.

The protein belongs to the pantothenate synthetase family. Homodimer.

The protein resides in the cytoplasm. The catalysed reaction is (R)-pantoate + beta-alanine + ATP = (R)-pantothenate + AMP + diphosphate + H(+). It participates in cofactor biosynthesis; (R)-pantothenate biosynthesis; (R)-pantothenate from (R)-pantoate and beta-alanine: step 1/1. Its function is as follows. Catalyzes the condensation of pantoate with beta-alanine in an ATP-dependent reaction via a pantoyl-adenylate intermediate. This Myxococcus xanthus (strain DK1622) protein is Pantothenate synthetase.